A 73-amino-acid chain; its full sequence is Potassium channel toxin alpha-KTx 27.4 (73 aa).

A signal peptide spans 1-26; that stretch reads MKFLFLTLVLLYFTAILVFIVFPSYA.

It belongs to the short scorpion toxin superfamily. Potassium channel inhibitor family. Alpha-KTx 27 subfamily. Contains 4 disulfide bonds. In terms of tissue distribution, expressed by the venom gland.

The protein localises to the secreted. The sequence is that of Potassium channel toxin alpha-KTx 27.4 from Mesobuthus gibbosus (Mediterranean checkered scorpion).